Consider the following 266-residue polypeptide: Type III pantothenate kinase (266 aa).

6–13 (DIGNSRIK) contributes to the ATP binding site. Substrate-binding positions include Y94 and 101–104 (GIDR). D103 (proton acceptor) is an active-site residue. Position 128 (D128) interacts with K(+). Position 131 (T131) interacts with ATP. T183 is a substrate binding site.

The protein belongs to the type III pantothenate kinase family. As to quaternary structure, homodimer. Requires NH4(+) as cofactor. The cofactor is K(+).

Its subcellular location is the cytoplasm. The catalysed reaction is (R)-pantothenate + ATP = (R)-4'-phosphopantothenate + ADP + H(+). Its pathway is cofactor biosynthesis; coenzyme A biosynthesis; CoA from (R)-pantothenate: step 1/5. In terms of biological role, catalyzes the phosphorylation of pantothenate (Pan), the first step in CoA biosynthesis. In Nitrosococcus oceani (strain ATCC 19707 / BCRC 17464 / JCM 30415 / NCIMB 11848 / C-107), this protein is Type III pantothenate kinase.